Here is a 577-residue protein sequence, read N- to C-terminus: Proline--tRNA ligase (577 aa).

It belongs to the class-II aminoacyl-tRNA synthetase family. ProS type 1 subfamily. As to quaternary structure, homodimer.

It localises to the cytoplasm. It carries out the reaction tRNA(Pro) + L-proline + ATP = L-prolyl-tRNA(Pro) + AMP + diphosphate. Functionally, catalyzes the attachment of proline to tRNA(Pro) in a two-step reaction: proline is first activated by ATP to form Pro-AMP and then transferred to the acceptor end of tRNA(Pro). As ProRS can inadvertently accommodate and process non-cognate amino acids such as alanine and cysteine, to avoid such errors it has two additional distinct editing activities against alanine. One activity is designated as 'pretransfer' editing and involves the tRNA(Pro)-independent hydrolysis of activated Ala-AMP. The other activity is designated 'posttransfer' editing and involves deacylation of mischarged Ala-tRNA(Pro). The misacylated Cys-tRNA(Pro) is not edited by ProRS. This Limosilactobacillus reuteri (strain DSM 20016) (Lactobacillus reuteri) protein is Proline--tRNA ligase.